Here is a 470-residue protein sequence, read N- to C-terminus: Pheromone a factor receptor (470 aa).

At 1–5 the chain is on the extracellular side; it reads MSYKS. Residues 6–23 form a helical membrane-spanning segment; the sequence is AIIGLCLLAVILLAPPLA. At 24–29 the chain is on the cytoplasmic side; it reads WHSHTK. Residues 30-53 form a helical membrane-spanning segment; sequence NIPAIILITWLLTMNLTCIVDAAI. Residues 54-70 lie on the Extracellular side of the membrane; it reads WSDDDFLTRWDGKGWCD. The helical transmembrane segment at 71-98 threads the bilayer; it reads IVIKLQVGANIGISCAVTNIIYNLHTIL. Over 99-116 the chain is Cytoplasmic; sequence KADSVLPDLSSWTKIVKD. Residues 117 to 134 form a helical membrane-spanning segment; the sequence is LVISLFTPVMVMGFSYLL. The Extracellular segment spans residues 135–155; the sequence is QVFRYGIARYNGCQNLLSPTW. Residues 156–183 traverse the membrane as a helical segment; sequence ITTVLYTMWMLIWSFVGAVYATLVLFVF. The Cytoplasmic segment spans residues 184–205; the sequence is YKKRKDVRDILHCTNSGLNLTR. Residues 206–228 traverse the membrane as a helical segment; it reads FARLLIFCFIIILVMFPFSVYTF. The Extracellular portion of the chain corresponds to 229–266; it reads VQDLQQVEGHYTFKNTHSSTIWNTIIKFDPGRPIYNIW. Residues 267 to 285 traverse the membrane as a helical segment; the sequence is LYVLMSYLVFLIFGLGSDA. The Cytoplasmic segment spans residues 286–470; sequence LHMYSKFLRS…EHSSENTAGP (185 aa). The tract at residues 300-470 is hydrophilic; the sequence is FVLDMWKRFI…EHSSENTAGP (171 aa). Residues 440–470 form a disordered region; the sequence is NFEGESLCYSPASKEENSSSNEHSSENTAGP.

Belongs to the G-protein coupled receptor 4 family.

Its subcellular location is the membrane. Its function is as follows. Receptor for the peptide pheromone a factor. In Saccharomyces cerevisiae (strain ATCC 204508 / S288c) (Baker's yeast), this protein is Pheromone a factor receptor (STE3).